The chain runs to 373 residues: DNA dC-&gt;dU-editing enzyme APOBEC-3F (373 aa).

2 consecutive CMP/dCMP-type deaminase domains span residues 29–137 and 174–321; these read RRNT…LCRL and DDNY…LRSL. Lys-52 participates in a covalent cross-link: (Microbial infection) Glycyl lysine isopeptide (Lys-Gly) (interchain with G-Cter in ubiquitin). 3 residues coordinate Zn(2+): His-65, Cys-96, and Cys-99. Lys-234 is covalently cross-linked ((Microbial infection) Glycyl lysine isopeptide (Lys-Gly) (interchain with G-Cter in ubiquitin)). His-249 contributes to the Zn(2+) binding site. The active-site Proton donor is Glu-251. Positions 280 and 283 each coordinate Zn(2+). Cys-280 and Cys-283 are disulfide-bonded. (Microbial infection) Glycyl lysine isopeptide (Lys-Gly) (interchain with G-Cter in ubiquitin) cross-links involve residues Lys-334, Lys-352, Lys-355, and Lys-358.

Belongs to the cytidine and deoxycytidylate deaminase family. In terms of assembly, homodimer. Interacts with APOBEC3G in an RNA-dependent manner. Interacts with AGO1, AGO2 and AGO3. (Microbial infection) Interacts with HIV-1 Vif, leading to its ubiquitination and degradation by the proteasome. In the absence of Vif protein, specifically packaged into HIV-1 virions. Zn(2+) serves as cofactor. (Microbial infection) Following infection by HIV-1, ubiquitinated by a cullin-5-RING E3 ubiquitin-protein ligase complex (ECS complex) hijacked by the HIV-1 Vif protein, leading to its degradation. As to expression, widely expressed. Highly expressed in ovary.

The protein resides in the cytoplasm. It localises to the P-body. The catalysed reaction is a 2'-deoxycytidine in single-stranded DNA + H2O + H(+) = a 2'-deoxyuridine in single-stranded DNA + NH4(+). (Microbial infection) Antiviral activity is neutralized by the HIV-1 virion infectivity factor (Vif), that prevents its incorporation into progeny virions by both inhibiting its translation and/or by inducing its ubiquitination and subsequent degradation by the 26S proteasome. Functionally, DNA deaminase (cytidine deaminase) which acts as an inhibitor of retrovirus replication and retrotransposon mobility via deaminase-dependent and -independent mechanisms. Exhibits antiviral activity against viruse such as HIV-1 or HIV-2. After the penetration of retroviral nucleocapsids into target cells of infection and the initiation of reverse transcription, it can induce the conversion of cytosine to uracil in the minus-sense single-strand viral DNA, leading to G-to-A hypermutations in the subsequent plus-strand viral DNA. The resultant detrimental levels of mutations in the proviral genome, along with a deamination-independent mechanism that works prior to the proviral integration, together exert efficient antiretroviral effects in infected target cells. Selectively targets single-stranded DNA and does not deaminate double-stranded DNA or single- or double-stranded RNA. Exhibits antiviral activity also against hepatitis B virus (HBV), equine infectious anemia virus (EIAV), xenotropic MuLV-related virus (XMRV) and simian foamy virus (SFV) and may inhibit the mobility of LTR and non-LTR retrotransposons. May also play a role in the epigenetic regulation of gene expression through the process of active DNA demethylation. This Homo sapiens (Human) protein is DNA dC-&gt;dU-editing enzyme APOBEC-3F.